The following is a 248-amino-acid chain: 2,3-bisphosphoglycerate-dependent phosphoglycerate mutase (248 aa).

Residues 8 to 15, 21 to 22, Arg60, 87 to 90, Lys98, 114 to 115, and 183 to 184 each bind substrate; these read RHGESIWN, TG, EKHY, RR, and GN. His9 acts as the Tele-phosphohistidine intermediate in catalysis. Glu87 serves as the catalytic Proton donor/acceptor.

This sequence belongs to the phosphoglycerate mutase family. BPG-dependent PGAM subfamily.

It catalyses the reaction (2R)-2-phosphoglycerate = (2R)-3-phosphoglycerate. It functions in the pathway carbohydrate degradation; glycolysis; pyruvate from D-glyceraldehyde 3-phosphate: step 3/5. Catalyzes the interconversion of 2-phosphoglycerate and 3-phosphoglycerate. The protein is 2,3-bisphosphoglycerate-dependent phosphoglycerate mutase of Parabacteroides distasonis (strain ATCC 8503 / DSM 20701 / CIP 104284 / JCM 5825 / NCTC 11152).